The following is a 474-amino-acid chain: Replication-associated protein (474 aa).

A Nuclear localization signal motif is present at residues G248 to R255. Residues A455–F474 form a disordered region.

Its subcellular location is the host nucleus. Functionally, plays an essential for the replication of viral DNA. Presumably cleaves viral genomic dsRNA replicative form to initiate rolling circle replication. In Avon-Heathcote Estuary associated kieseladnavirus (AHEaBV), this protein is Replication-associated protein.